The sequence spans 277 residues: Thymidylate synthase (277 aa).

R21 serves as a coordination point for dUMP. H51 is a binding site for (6R)-5,10-methylene-5,6,7,8-tetrahydrofolate. 126-127 serves as a coordination point for dUMP; the sequence is RR. The Nucleophile role is filled by C159. DUMP-binding positions include 179–182, N190, and 220–222; these read RSSD and HAY. D182 contacts (6R)-5,10-methylene-5,6,7,8-tetrahydrofolate. Residue A276 coordinates (6R)-5,10-methylene-5,6,7,8-tetrahydrofolate.

This sequence belongs to the thymidylate synthase family. Bacterial-type ThyA subfamily. Homodimer.

The protein resides in the cytoplasm. The catalysed reaction is dUMP + (6R)-5,10-methylene-5,6,7,8-tetrahydrofolate = 7,8-dihydrofolate + dTMP. Its pathway is pyrimidine metabolism; dTTP biosynthesis. Its function is as follows. Catalyzes the reductive methylation of 2'-deoxyuridine-5'-monophosphate (dUMP) to 2'-deoxythymidine-5'-monophosphate (dTMP) while utilizing 5,10-methylenetetrahydrofolate (mTHF) as the methyl donor and reductant in the reaction, yielding dihydrofolate (DHF) as a by-product. This enzymatic reaction provides an intracellular de novo source of dTMP, an essential precursor for DNA biosynthesis. This Pseudomonas fluorescens (strain SBW25) protein is Thymidylate synthase.